The following is a 677-amino-acid chain: Pro-neuregulin-1, membrane-bound isoform (677 aa).

The span at 1–12 (MAEKKKVKEGKG) shows a compositional bias: basic and acidic residues. 2 disordered regions span residues 1–43 (MAEK…KEIK) and 78–106 (GAKN…ISKA). Over 1–260 (MAEKKKVKEG…MEAEELYQKR (260 aa)) the chain is Extracellular. Basic residues predominate over residues 13-24 (RKGKGKKDRKGK). Residues 37-132 (PKLKEIKTQS…GNDTVTVNVT (96 aa)) enclose the Ig-like C2-type domain. A disulfide bridge links Cys57 with Cys116. A compositionally biased stretch (basic and acidic residues) spans 78-91 (GAKNKPDSKPEHIK). N-linked (GlcNAc...) asparagine glycosylation is found at Asn124 and Asn130. Residues 188–232 (HLIKCSDKEKTYCVNGGECYVLNGITSSNQFMCKCKPGFTGARCT) enclose the EGF-like domain. 3 disulfide bridges follow: Cys192–Cys206, Cys200–Cys220, and Cys222–Cys231. The helical transmembrane segment at 261-280 (VLTITGICIDLLVVGDMCVV) threads the bilayer. At 281–677 (DAYCKTKKQR…RKMTCKTLFI (397 aa)) the chain is on the cytoplasmic side. The span at 294–315 (NDRLRQSLRERNKNITNKDNRP) shows a compositional bias: basic and acidic residues. 5 disordered regions span residues 294–326 (NDRL…PRKN), 350–375 (ETSF…PSHS), 397–418 (SVEN…GIGG), 457–479 (VEFK…ESSL), and 503–617 (PPRL…FLSI). Positions 351–375 (TSFSTSHYTSTTHHSTTVTQTPSHS) are enriched in low complexity. A compositionally biased stretch (polar residues) spans 397-407 (SVENSRHTSPT). Positions 505 to 515 (RLREKRYDRKT) are enriched in basic and acidic residues. The segment covering 568 to 578 (VNSRRQKRTKP) has biased composition (basic residues). Residues 591–600 (DSSSESSTSE) show a composition bias toward low complexity.

It belongs to the neuregulin family. Proteolytic cleavage close to the plasma membrane on the external face leads to the release of the soluble growth factor form. In terms of processing, extensive glycosylation precedes the proteolytic cleavage. Isoform alpha1 is expressed in brain and muscle. Isoform CRD is expressed in brain and spinal cord, but at very low level in muscle.

It is found in the cell membrane. The protein localises to the secreted. Direct ligand for the ERBB tyrosine kinase receptors. Induces expression of acetylcholine receptor in synaptic nuclei. This is Pro-neuregulin-1, membrane-bound isoform (nrg1) from Xenopus laevis (African clawed frog).